Consider the following 298-residue polypeptide: (DL)-glycerol-3-phosphatase 1, mitochondrial (298 aa).

The N-terminal 46 residues, 1 to 46, are a transit peptide targeting the mitochondrion; it reads MLTTPTRFVALRIPFRSSNKIPISIAPSPKVFPRKPVIRVPASLRF. Catalysis depends on aspartate 77, which acts as the Nucleophile. Positions 77, 79, and 242 each coordinate Mg(2+). The active-site Proton donor is aspartate 79.

This sequence belongs to the HAD-like hydrolase superfamily. DOG/GPP family. The cofactor is Mg(2+). In terms of tissue distribution, ubiquitous with highest expression in siliques. Mainly restricted to the meristem of immature flower and vascular elements of the root, shoot, leave, siliqua and developing embryo (at the protein level).

The protein resides in the mitochondrion. The catalysed reaction is sn-glycerol 1-phosphate + H2O = glycerol + phosphate. It catalyses the reaction sn-glycerol 3-phosphate + H2O = glycerol + phosphate. The enzyme catalyses 5-amino-6-(5-phospho-D-ribitylamino)uracil + H2O = 5-amino-6-(D-ribitylamino)uracil + phosphate. Its function is as follows. Acts as a glycerol-3-phosphatase with higher stereospecificity for L-glycerol-3-phosphate than DL-glycerol-3-phosphate. Can also dephosphorylate in vitro 5-amino-6-(5-phospho-D-ribitylamino)uracil, also known as ARPP. In Arabidopsis thaliana (Mouse-ear cress), this protein is (DL)-glycerol-3-phosphatase 1, mitochondrial.